The primary structure comprises 452 residues: Chromosomal replication initiator protein DnaA (452 aa).

Positions 1 to 72 (MPDMLTLWTD…LVEYAYQAAH (72 aa)) are domain I, interacts with DnaA modulators. Residues 72-114 (HEDIQPVLILENERQQQATLKAKTAPVAAGEPVEPTPTFMKET) form a domain II region. The interval 115-331 (ALNSRYTFDT…GALARVQAYS (217 aa)) is domain III, AAA+ region. Residues Gly-159, Gly-161, Lys-162, and Thr-163 each coordinate ATP. A domain IV, binds dsDNA region spans residues 332-452 (QLMHQPIATD…IDSLKDDLRR (121 aa)).

Belongs to the DnaA family. In terms of assembly, oligomerizes as a right-handed, spiral filament on DNA at oriC.

Its subcellular location is the cytoplasm. Functionally, plays an essential role in the initiation and regulation of chromosomal replication. ATP-DnaA binds to the origin of replication (oriC) to initiate formation of the DNA replication initiation complex once per cell cycle. Binds the DnaA box (a 9 base pair repeat at the origin) and separates the double-stranded (ds)DNA. Forms a right-handed helical filament on oriC DNA; dsDNA binds to the exterior of the filament while single-stranded (ss)DNA is stabiized in the filament's interior. The ATP-DnaA-oriC complex binds and stabilizes one strand of the AT-rich DNA unwinding element (DUE), permitting loading of DNA polymerase. After initiation quickly degrades to an ADP-DnaA complex that is not apt for DNA replication. Binds acidic phospholipids. This chain is Chromosomal replication initiator protein DnaA, found in Levilactobacillus brevis (strain ATCC 367 / BCRC 12310 / CIP 105137 / JCM 1170 / LMG 11437 / NCIMB 947 / NCTC 947) (Lactobacillus brevis).